The primary structure comprises 108 residues: UPF0060 membrane protein YnfA (108 aa).

The Periplasmic segment spans residues 1–5 (MLKTT). The chain crosses the membrane as a helical span at residues 6-26 (LLFFVTALCEIIGCFLPWLWL). Topologically, residues 27–30 (KRGA) are cytoplasmic. A helical transmembrane segment spans residues 31–51 (SVWWLLPAAASLALFVWLLTL). Residues 52-60 (HPAASGRVY) are Periplasmic-facing. The chain crosses the membrane as a helical span at residues 61–81 (AAYGGVYVCTALLWLRVVDGV). At 82–84 (RLT) the chain is on the cytoplasmic side. Residues 85–105 (VYDWCGALIALCGMLIIVVGW) form a helical membrane-spanning segment. The Periplasmic portion of the chain corresponds to 106–108 (GRT).

Belongs to the UPF0060 family.

It localises to the cell inner membrane. The sequence is that of UPF0060 membrane protein YnfA from Salmonella agona (strain SL483).